A 253-amino-acid polypeptide reads, in one-letter code: Ribosomal RNA small subunit methyltransferase I (253 aa).

Residues 230-246 (RKEQRSQRSFSKGDKKP) are compositionally biased toward basic and acidic residues. The tract at residues 230–253 (RKEQRSQRSFSKGDKKPSFKRFKK) is disordered.

Belongs to the methyltransferase superfamily. RsmI family.

It localises to the cytoplasm. The enzyme catalyses cytidine(1402) in 16S rRNA + S-adenosyl-L-methionine = 2'-O-methylcytidine(1402) in 16S rRNA + S-adenosyl-L-homocysteine + H(+). Functionally, catalyzes the 2'-O-methylation of the ribose of cytidine 1402 (C1402) in 16S rRNA. The polypeptide is Ribosomal RNA small subunit methyltransferase I (Leptospira borgpetersenii serovar Hardjo-bovis (strain L550)).